The sequence spans 397 residues: Phosphoglycerate kinase (397 aa).

Residues 19–21 (DFN), R35, 58–61 (HLGR), R117, and R150 contribute to the substrate site. ATP-binding positions include K201, E323, and 349–352 (GGDS).

It belongs to the phosphoglycerate kinase family. Monomer.

It is found in the cytoplasm. The enzyme catalyses (2R)-3-phosphoglycerate + ATP = (2R)-3-phospho-glyceroyl phosphate + ADP. It functions in the pathway carbohydrate degradation; glycolysis; pyruvate from D-glyceraldehyde 3-phosphate: step 2/5. The protein is Phosphoglycerate kinase of Syntrophobacter fumaroxidans (strain DSM 10017 / MPOB).